Reading from the N-terminus, the 642-residue chain is Mini-chromosome maintenance complex-binding protein (642 aa).

Residues 151–161 (ARVSPSTSYTP) show a composition bias toward polar residues. A disordered region spans residues 151 to 196 (ARVSPSTSYTPSRHKRSYEDDEDMDLQPSKQKEQHPGSRQAGGLGG). A Phosphoserine modification is found at serine 154. At threonine 160 the chain carries Phosphothreonine. Phosphoserine occurs at positions 167 and 298.

The protein belongs to the MCMBP family. In terms of assembly, interacts with the MCM complex: associates with the MCM3-7 complex which lacks MCM2, while it does not interact with the MCM complex when MCM2 is present (MCM2-7 complex). Interacts with the RPA complex, when composed of all RPA1, RPA2 and RPA3 components, but not with RPA1 or RPA2 alone.

The protein localises to the nucleus. Functionally, associated component of the MCM complex that acts as a regulator of DNA replication. Binds to the MCM complex during late S phase and promotes the disassembly of the MCM complex from chromatin, thereby acting as a key regulator of pre-replication complex (pre-RC) unloading from replicated DNA. Can dissociate the MCM complex without addition of ATP; probably acts by destabilizing interactions of each individual subunits of the MCM complex. Required for sister chromatid cohesion. The chain is Mini-chromosome maintenance complex-binding protein (Mcmbp) from Mus musculus (Mouse).